A 952-amino-acid chain; its full sequence is Respiratory burst oxidase homolog protein E (952 aa).

Residues 1 to 392 are Cytoplasmic-facing; sequence MKLSPLSFST…QCLILDNWQR (392 aa). EF-hand-like stretches follow at residues 211–219 and 245–256; these read SKNGLLARD and RRQKLEKITKDE. EF-hand domains follow at residues 268–303 and 312–347; these read SFDARLQIFFDMADSNEDGKITREEIKELLMLSASA and QAEEYASLIMEELDPENFGYIELWQLETLLLQRDAY. The Ca(2+) site is built by aspartate 281, asparagine 283, aspartate 285, lysine 287, and glutamate 292. A helical membrane pass occupies residues 393 to 413; the sequence is SWVLLVWVMLMAILFVWKFLE. Residues 414–475 lie on the Extracellular side of the membrane; the sequence is YREKAAFKVM…PFDDNINFHK (62 aa). Positions 431-587 constitute a Ferric oxidoreductase domain; it reads KGAAETLKLN…LLVVVYIMLI (157 aa). A helical transmembrane segment spans residues 476–496; it reads IIACAIAIGILVHAGTHLACD. The Cytoplasmic segment spans residues 497-531; it reads FPRIINSSPEQFVLIASAFNGTKPTFKDLMTGAEG. Residues 532-552 traverse the membrane as a helical segment; sequence ITGISMVILTTIAFTLASTHF. At 553-574 the chain is on the extracellular side; that stretch reads RRNRVRLPAPLDRLTGFNAFWY. Residues 575-595 traverse the membrane as a helical segment; it reads THHLLVVVYIMLIVHGTFLFF. Residues 596 to 603 are Cytoplasmic-facing; it reads ADKWYQKT. A helical membrane pass occupies residues 604–621; the sequence is TWMYISVPLVLYVAERSL. Residues 622-750 lie on the Extracellular side of the membrane; it reads RACRSKHYSV…PYGAPAQDYR (129 aa). Positions 626 to 748 constitute an FAD-binding FR-type domain; the sequence is SKHYSVKILK…DGPYGAPAQD (123 aa). The chain crosses the membrane as a helical span at residues 751–771; it reads SYDVLLLIGLGIGATPFISIL. The Cytoplasmic segment spans residues 772-952; sequence KDLLNNSRDE…TRFEFHKEHF (181 aa).

Belongs to the RBOH (TC 5.B.1.3) family. In terms of assembly, monomer and homodimer. In terms of tissue distribution, expressed in roots, inflorescences, leaves and stems.

It localises to the membrane. Its function is as follows. Calcium-dependent NADPH oxidase that generates superoxide. The chain is Respiratory burst oxidase homolog protein E (RBOHE) from Arabidopsis thaliana (Mouse-ear cress).